We begin with the raw amino-acid sequence, 274 residues long: MHFIFIILSLSFVVNADVFPSSVTLSSNDFDTIIKWDNNVISYDVELMQYSHDEWRTVCTNSLGYCNLTNSDIDNDDETWVRFKYENKTSNEHNIGRVCEIVQITSPIVNMTRDGSIILLDIHHPMTYDNQYYIYNNITLCGFEFIYEATFIINDTIIPYSIDNQYCDDVHCLFYFISQEPVCVYVMGMEQYYEFGPKKTDNSTRVCVDGLIPRKIDTYFIKDFDDIDRVNNRLYRVVSDKYESNISSKFMHLYNNILSSFKLILQELMVNTEQ.

It belongs to the type II cytokine receptor family.

This is an uncharacterized protein from Sus scrofa (Pig).